A 126-amino-acid chain; its full sequence is Protein Wnt-1 (126 aa).

Residue Ser1 is the site of O-palmitoleoyl serine; by PORCN attachment. Cys92 and Cys107 are oxidised to a cystine. Residues Asn93 and Asn123 are each glycosylated (N-linked (GlcNAc...) asparagine).

This sequence belongs to the Wnt family. Post-translationally, palmitoleoylation is required for efficient binding to frizzled receptors. Palmitoleoylation is necessary for proper trafficking to cell surface. Depalmitoleoylated by NOTUM, leading to inhibit Wnt signaling pathway.

The protein localises to the secreted. It is found in the extracellular space. Its subcellular location is the extracellular matrix. Ligand for members of the frizzled family of seven transmembrane receptors. Acts in the canonical Wnt signaling pathway by promoting beta-catenin-dependent transcriptional activation. Plays an essential role in the development of the embryonic brain and central nervous system (CNS). Has a role in osteoblast function, bone development and bone homeostasis. The polypeptide is Protein Wnt-1 (WNT-1) (Pituophis melanoleucus (Pine snake)).